The primary structure comprises 685 residues: tRNA 5-methylaminomethyl-2-thiouridine biosynthesis bifunctional protein MnmC (685 aa).

The segment at 1–272 (MTAEPNKPCQ…MAAILSSATQ (272 aa)) is tRNA (mnm(5)s(2)U34)-methyltransferase. The segment at 278–685 (IGGGLASAHL…LRKLLKGKAL (408 aa)) is FAD-dependent cmnm(5)s(2)U34 oxidoreductase.

This sequence in the N-terminal section; belongs to the methyltransferase superfamily. tRNA (mnm(5)s(2)U34)-methyltransferase family. It in the C-terminal section; belongs to the DAO family. FAD is required as a cofactor.

It is found in the cytoplasm. It carries out the reaction 5-aminomethyl-2-thiouridine(34) in tRNA + S-adenosyl-L-methionine = 5-methylaminomethyl-2-thiouridine(34) in tRNA + S-adenosyl-L-homocysteine + H(+). In terms of biological role, catalyzes the last two steps in the biosynthesis of 5-methylaminomethyl-2-thiouridine (mnm(5)s(2)U) at the wobble position (U34) in tRNA. Catalyzes the FAD-dependent demodification of cmnm(5)s(2)U34 to nm(5)s(2)U34, followed by the transfer of a methyl group from S-adenosyl-L-methionine to nm(5)s(2)U34, to form mnm(5)s(2)U34. The polypeptide is tRNA 5-methylaminomethyl-2-thiouridine biosynthesis bifunctional protein MnmC (Shewanella baltica (strain OS185)).